The following is a 255-amino-acid chain: Thiazole synthase (255 aa).

Lys-96 acts as the Schiff-base intermediate with DXP in catalysis. Residues Gly-157, 183-184 (AG), and 205-206 (NT) contribute to the 1-deoxy-D-xylulose 5-phosphate site.

The protein belongs to the ThiG family. Homotetramer. Forms heterodimers with either ThiH or ThiS.

Its subcellular location is the cytoplasm. The enzyme catalyses [ThiS sulfur-carrier protein]-C-terminal-Gly-aminoethanethioate + 2-iminoacetate + 1-deoxy-D-xylulose 5-phosphate = [ThiS sulfur-carrier protein]-C-terminal Gly-Gly + 2-[(2R,5Z)-2-carboxy-4-methylthiazol-5(2H)-ylidene]ethyl phosphate + 2 H2O + H(+). The protein operates within cofactor biosynthesis; thiamine diphosphate biosynthesis. Its function is as follows. Catalyzes the rearrangement of 1-deoxy-D-xylulose 5-phosphate (DXP) to produce the thiazole phosphate moiety of thiamine. Sulfur is provided by the thiocarboxylate moiety of the carrier protein ThiS. In vitro, sulfur can be provided by H(2)S. The chain is Thiazole synthase from Staphylococcus epidermidis (strain ATCC 35984 / DSM 28319 / BCRC 17069 / CCUG 31568 / BM 3577 / RP62A).